We begin with the raw amino-acid sequence, 159 residues long: NADH-quinone oxidoreductase subunit B (159 aa).

The [4Fe-4S] cluster site is built by Cys-36, Cys-37, Cys-102, and Cys-132.

It belongs to the complex I 20 kDa subunit family. As to quaternary structure, NDH-1 is composed of 14 different subunits. Subunits NuoB, C, D, E, F, and G constitute the peripheral sector of the complex. The cofactor is [4Fe-4S] cluster.

The protein localises to the cell inner membrane. The enzyme catalyses a quinone + NADH + 5 H(+)(in) = a quinol + NAD(+) + 4 H(+)(out). Functionally, NDH-1 shuttles electrons from NADH, via FMN and iron-sulfur (Fe-S) centers, to quinones in the respiratory chain. Couples the redox reaction to proton translocation (for every two electrons transferred, four hydrogen ions are translocated across the cytoplasmic membrane), and thus conserves the redox energy in a proton gradient. In Paracidovorax citrulli (strain AAC00-1) (Acidovorax citrulli), this protein is NADH-quinone oxidoreductase subunit B.